A 338-amino-acid polypeptide reads, in one-letter code: uncharacterized protein (338 aa).

Transmembrane regions (helical) follow at residues 13 to 33, 71 to 91, 110 to 130, 176 to 196, 218 to 238, and 301 to 321; these read PAYS…DFLM, GLYS…ALFF, TLCF…VYVP, YGYR…LLFY, LITG…LDVA, and FRGF…MFVF. Solcar repeat units lie at residues 13–100, 108–202, and 216–328; these read PAYS…TKRH, PETL…LRQV, and RELI…IIRL.

The protein belongs to the mitochondrial carrier (TC 2.A.29) family.

It is found in the mitochondrion inner membrane. Functionally, mitochondrial solute carriers shuttle metabolites, nucleotides, and cofactors through the mitochondrial inner membrane. This is an uncharacterized protein from Schizosaccharomyces pombe (strain 972 / ATCC 24843) (Fission yeast).